A 138-amino-acid polypeptide reads, in one-letter code: Large ribosomal subunit protein uL16m (138 aa).

It belongs to the universal ribosomal protein uL16 family.

The protein localises to the mitochondrion. The protein is Large ribosomal subunit protein uL16m (RPL16) of Chondrus crispus (Carrageen Irish moss).